The chain runs to 385 residues: S-adenosylmethionine synthase (385 aa).

His16 provides a ligand contact to ATP. Asp18 contributes to the Mg(2+) binding site. Glu44 contacts K(+). Glu57 and Gln100 together coordinate L-methionine. Residues 100-110 (QSPDINQGVDR) form a flexible loop region. Residues 164 to 166 (DGK), 230 to 231 (KF), Asp239, 245 to 246 (RK), Ala262, and Lys266 each bind ATP. Residue Asp239 coordinates L-methionine. Position 270 (Lys270) interacts with L-methionine.

This sequence belongs to the AdoMet synthase family. In terms of assembly, homotetramer; dimer of dimers. Mg(2+) is required as a cofactor. The cofactor is K(+).

It localises to the cytoplasm. It catalyses the reaction L-methionine + ATP + H2O = S-adenosyl-L-methionine + phosphate + diphosphate. The protein operates within amino-acid biosynthesis; S-adenosyl-L-methionine biosynthesis; S-adenosyl-L-methionine from L-methionine: step 1/1. Functionally, catalyzes the formation of S-adenosylmethionine (AdoMet) from methionine and ATP. The overall synthetic reaction is composed of two sequential steps, AdoMet formation and the subsequent tripolyphosphate hydrolysis which occurs prior to release of AdoMet from the enzyme. This Helicobacter pylori (strain ATCC 700392 / 26695) (Campylobacter pylori) protein is S-adenosylmethionine synthase.